The primary structure comprises 407 residues: Uronyl 2-sulfotransferase (407 aa).

Residues 1–20 (MKKKQQQHPGGGTDPWPHGA) are disordered. Over 1-49 (MKKKQQQHPGGGTDPWPHGAPVGGAPPCLGSCKRRIPLLPFLRFSLRDY) the chain is Cytoplasmic. Residues 50-70 (GFCMATLLVFCLGSLFYQLSG) form a helical; Signal-anchor for type II membrane protein membrane-spanning segment. The Lumenal segment spans residues 71 to 407 (GPPRFLLDLR…EKWLEDIYKR (337 aa)). Residues asparagine 85, asparagine 141, and asparagine 156 are each glycosylated (N-linked (GlcNAc...) asparagine). Histidine 169 is a catalytic residue. N-linked (GlcNAc...) asparagine glycans are attached at residues asparagine 174 and asparagine 320. Over residues 386–400 (TEEPIDDEEQDDEKW) the composition is skewed to acidic residues. Residues 386–407 (TEEPIDDEEQDDEKWLEDIYKR) form a disordered region.

This sequence belongs to the sulfotransferase 3 family.

Its subcellular location is the golgi apparatus membrane. Functionally, sulfotransferase that catalyzes the transfer of sulfate to the position 2 of uronyl residues in glycosaminoglycan chains. Has mainly activity toward iduronyl residues in dermatan sulfate, and weaker activity toward glucuronyl residues of chondroitin sulfate. Has no activity toward desulfated N-resulfated heparin. This is Uronyl 2-sulfotransferase from Mus musculus (Mouse).